A 282-amino-acid chain; its full sequence is Shikimate dehydrogenase (NADP(+)) (282 aa).

Shikimate is bound by residues 15–17 and Thr62; that span reads SKS. The active-site Proton acceptor is the Lys66. The shikimate site is built by Asn87 and Asp103. NADP(+) is bound by residues 127-131, 151-156, and Met220; these read GAGGA and NRTHTK. Position 222 (Tyr222) interacts with shikimate. An NADP(+)-binding site is contributed by Gly244.

The protein belongs to the shikimate dehydrogenase family. As to quaternary structure, homodimer.

It catalyses the reaction shikimate + NADP(+) = 3-dehydroshikimate + NADPH + H(+). The protein operates within metabolic intermediate biosynthesis; chorismate biosynthesis; chorismate from D-erythrose 4-phosphate and phosphoenolpyruvate: step 4/7. Functionally, involved in the biosynthesis of the chorismate, which leads to the biosynthesis of aromatic amino acids. Catalyzes the reversible NADPH linked reduction of 3-dehydroshikimate (DHSA) to yield shikimate (SA). This Shewanella baltica (strain OS185) protein is Shikimate dehydrogenase (NADP(+)).